A 214-amino-acid polypeptide reads, in one-letter code: Thiamine pyrophosphokinase (214 aa).

Belongs to the thiamine pyrophosphokinase family.

It catalyses the reaction thiamine + ATP = thiamine diphosphate + AMP + H(+). Its pathway is cofactor biosynthesis; thiamine diphosphate biosynthesis; thiamine diphosphate from thiamine: step 1/1. Catalyzes the ATP-dependent phosphorylation of thiamine to thiamine pyrophosphate. Is involved in thiamine salvage. This Bacillus subtilis (strain 168) protein is Thiamine pyrophosphokinase.